The following is a 263-amino-acid chain: 4'-phosphopantetheinyl transferase pptA (263 aa).

Belongs to the P-Pant transferase superfamily.

The enzyme catalyses apo-[ACP] + CoA = holo-[ACP] + adenosine 3',5'-bisphosphate + H(+). Functionally, transfers the 4'-phosphopantetheine moiety from coenzyme A to a Ser of an acyl-carrier-protein. Activates the peptidyl carrier protein (PCP) domains of surfactin synthas. This chain is 4'-phosphopantetheinyl transferase pptA (pptA), found in Paxillus involutus (Naked brimcap).